Here is a 782-residue protein sequence, read N- to C-terminus: Coiled-coil alpha-helical rod protein 1 (782 aa).

Basic and acidic residues-rich tracts occupy residues 62–74 (ERDVSSDRQEPGR) and 208–218 (ETRRAGEAKEL). 2 disordered regions span residues 62–82 (ERDVSSDRQEPGRRGRSWGLE) and 185–218 (AHKEALSSLTSKAEGLEKSLSSLETRRAGEAKEL). Coiled coils occupy residues 82 to 314 (EGSQ…ELTR), 344 to 398 (LMVQ…EVER), and 498 to 691 (VTDV…QQEG).

It is found in the cytoplasm. Its subcellular location is the nucleus. In terms of biological role, may be a regulator of keratinocyte proliferation or differentiation. This is Coiled-coil alpha-helical rod protein 1 (CCHCR1) from Gorilla gorilla gorilla (Western lowland gorilla).